A 485-amino-acid polypeptide reads, in one-letter code: Adenosylhomocysteinase (485 aa).

Substrate-binding residues include Thr64, Asp139, and Glu205. Residue 206 to 208 coordinates NAD(+); that stretch reads TTT. The substrate site is built by Lys235 and Asp239. NAD(+) contacts are provided by residues Asn240, 269-274, Glu292, Asn327, 348-350, and Asn397; these read GYGDVG and IGH.

The protein belongs to the adenosylhomocysteinase family. In terms of assembly, homotetramer. The cofactor is NAD(+).

It catalyses the reaction S-adenosyl-L-homocysteine + H2O = L-homocysteine + adenosine. It participates in amino-acid biosynthesis; L-homocysteine biosynthesis; L-homocysteine from S-adenosyl-L-homocysteine: step 1/1. Adenosylhomocysteine is a competitive inhibitor of S-adenosyl-L-methionine-dependent methyl transferase reactions; therefore adenosylhomocysteinase may play a key role in the control of methylations via regulation of the intracellular concentration of adenosylhomocysteine. This chain is Adenosylhomocysteinase (SAHH), found in Triticum aestivum (Wheat).